The chain runs to 235 residues: uncharacterized protein (235 aa).

Belongs to the UreF family.

Its subcellular location is the cytoplasm. It is found in the nucleus. Probably facilitates nickel incorporation. This is an uncharacterized protein from Schizosaccharomyces pombe (strain 972 / ATCC 24843) (Fission yeast).